The following is a 245-amino-acid chain: Enolase-phosphatase E1 (245 aa).

The protein belongs to the HAD-like hydrolase superfamily. MasA/MtnC family. Monomer. It depends on Mg(2+) as a cofactor.

The enzyme catalyses 5-methylsulfanyl-2,3-dioxopentyl phosphate + H2O = 1,2-dihydroxy-5-(methylsulfanyl)pent-1-en-3-one + phosphate. Its pathway is amino-acid biosynthesis; L-methionine biosynthesis via salvage pathway; L-methionine from S-methyl-5-thio-alpha-D-ribose 1-phosphate: step 3/6. The protein operates within amino-acid biosynthesis; L-methionine biosynthesis via salvage pathway; L-methionine from S-methyl-5-thio-alpha-D-ribose 1-phosphate: step 4/6. In terms of biological role, bifunctional enzyme that catalyzes the enolization of 2,3-diketo-5-methylthiopentyl-1-phosphate (DK-MTP-1-P) into the intermediate 2-hydroxy-3-keto-5-methylthiopentenyl-1-phosphate (HK-MTPenyl-1-P), which is then dephosphorylated to form the acireductone 1,2-dihydroxy-3-keto-5-methylthiopentene (DHK-MTPene). The sequence is that of Enolase-phosphatase E1 from Prochlorococcus marinus (strain MIT 9313).